The primary structure comprises 192 residues: Ion-translocating oxidoreductase complex subunit B (192 aa).

The interval 1–26 (MNAIWIAVVAVSLLGLAFGAILGYAS) is hydrophobic. The 60-residue stretch at 32 to 91 (EDDPVVEKIDEILPQSQCGQCGYPGCRPYAEAIGSQGEKINRCAPGGEAVMLKIATLLNV) folds into the 4Fe-4S domain. [4Fe-4S] cluster contacts are provided by cysteine 49, cysteine 52, cysteine 57, cysteine 74, cysteine 117, cysteine 120, cysteine 123, cysteine 127, cysteine 147, cysteine 150, cysteine 153, and cysteine 157. 4Fe-4S ferredoxin-type domains are found at residues 108–137 (MLAVIDENNCIGCTKCIQACPVDAIVGATR) and 138–167 (AMHTVMSDLCTGCNLCVDPCPTQCIELRPV).

The protein belongs to the 4Fe4S bacterial-type ferredoxin family. RnfB subfamily. In terms of assembly, the complex is composed of six subunits: RnfA, RnfB, RnfC, RnfD, RnfE and RnfG. [4Fe-4S] cluster serves as cofactor.

Its subcellular location is the cell inner membrane. Functionally, part of a membrane-bound complex that couples electron transfer with translocation of ions across the membrane. The chain is Ion-translocating oxidoreductase complex subunit B from Citrobacter koseri (strain ATCC BAA-895 / CDC 4225-83 / SGSC4696).